A 148-amino-acid polypeptide reads, in one-letter code: MDVIIENRKVRFNYFIIQEFDAGIVLIGSEVKSLRQRKVSIAEAYVTEKNMELWLCNLHISEYNHASTKNHNPTRPRKLLLRKKQIYKISGNIKNDGFTVVPLSLYFNEKGLAKAKIVIVKGKKLHDKRETIKTRDWNREKSRVLRGN.

Belongs to the SmpB family.

The protein resides in the cytoplasm. Required for rescue of stalled ribosomes mediated by trans-translation. Binds to transfer-messenger RNA (tmRNA), required for stable association of tmRNA with ribosomes. tmRNA and SmpB together mimic tRNA shape, replacing the anticodon stem-loop with SmpB. tmRNA is encoded by the ssrA gene; the 2 termini fold to resemble tRNA(Ala) and it encodes a 'tag peptide', a short internal open reading frame. During trans-translation Ala-aminoacylated tmRNA acts like a tRNA, entering the A-site of stalled ribosomes, displacing the stalled mRNA. The ribosome then switches to translate the ORF on the tmRNA; the nascent peptide is terminated with the 'tag peptide' encoded by the tmRNA and targeted for degradation. The ribosome is freed to recommence translation, which seems to be the essential function of trans-translation. The protein is SsrA-binding protein of Ehrlichia canis (strain Jake).